The primary structure comprises 218 residues: DNA replication complex GINS protein psf3 (218 aa).

Residues 147–163 (GGGSSYHGRDGGGAGGK) show a composition bias toward gly residues. Residues 147 to 182 (GGGSSYHGRDGGGAGGKGKGKATKDDNASNLGVGGA) are disordered.

It belongs to the GINS3/PSF3 family. Component of the GINS complex which is a heterotetramer of div-26/sld5, drc-1/psf1, drc-2/psf2 and drc-3/psf3.

The protein resides in the nucleus. In terms of biological role, the GINS complex plays an essential role in the initiation of DNA replication. The chain is DNA replication complex GINS protein psf3 (drc-3) from Neurospora crassa (strain ATCC 24698 / 74-OR23-1A / CBS 708.71 / DSM 1257 / FGSC 987).